We begin with the raw amino-acid sequence, 611 residues long: Chaperone protein DnaK (611 aa).

T172 carries the post-translational modification Phosphothreonine; by autocatalysis. Residues 575-611 form a disordered region; that stretch reads AAQAAQAQQDGGNESADKQDDNVVDADYEEVNDDDKK. A compositionally biased stretch (acidic residues) spans 596–611; the sequence is NVVDADYEEVNDDDKK.

It belongs to the heat shock protein 70 family.

Its function is as follows. Acts as a chaperone. This Shouchella clausii (strain KSM-K16) (Alkalihalobacillus clausii) protein is Chaperone protein DnaK.